The following is a 557-amino-acid chain: Ribonuclease J 2 (557 aa).

Positions 76, 78, 144, and 166 each coordinate Zn(2+). Position 366–370 (366–370) interacts with substrate; it reads HASSH.

The protein belongs to the metallo-beta-lactamase superfamily. RNA-metabolizing metallo-beta-lactamase-like family. Bacterial RNase J subfamily. Homodimer, may be a subunit of the RNA degradosome. The cofactor is Zn(2+).

The protein resides in the cytoplasm. Functionally, an RNase that has 5'-3' exonuclease and possibly endoonuclease activity. Involved in maturation of rRNA and in some organisms also mRNA maturation and/or decay. This chain is Ribonuclease J 2, found in Staphylococcus saprophyticus subsp. saprophyticus (strain ATCC 15305 / DSM 20229 / NCIMB 8711 / NCTC 7292 / S-41).